Reading from the N-terminus, the 136-residue chain is Large ribosomal subunit protein uL16c (136 aa).

The protein belongs to the universal ribosomal protein uL16 family. Part of the 50S ribosomal subunit.

It is found in the plastid. The protein resides in the chloroplast. The chain is Large ribosomal subunit protein uL16c from Buxus microphylla (Littleleaf boxwood).